Consider the following 123-residue polypeptide: Small ribosomal subunit protein uS12 (123 aa).

The residue at position 89 (Asp-89) is a 3-methylthioaspartic acid.

It belongs to the universal ribosomal protein uS12 family. Part of the 30S ribosomal subunit. Contacts proteins S8 and S17. May interact with IF1 in the 30S initiation complex.

With S4 and S5 plays an important role in translational accuracy. Its function is as follows. Interacts with and stabilizes bases of the 16S rRNA that are involved in tRNA selection in the A site and with the mRNA backbone. Located at the interface of the 30S and 50S subunits, it traverses the body of the 30S subunit contacting proteins on the other side and probably holding the rRNA structure together. The combined cluster of proteins S8, S12 and S17 appears to hold together the shoulder and platform of the 30S subunit. This is Small ribosomal subunit protein uS12 from Geobacter metallireducens (strain ATCC 53774 / DSM 7210 / GS-15).